Consider the following 72-residue polypeptide: UPF0150 protein ssl0738 (72 aa).

It belongs to the UPF0150 family.

The polypeptide is UPF0150 protein ssl0738 (Synechocystis sp. (strain ATCC 27184 / PCC 6803 / Kazusa)).